An 84-amino-acid chain; its full sequence is Defensin-like protein 37 (84 aa).

The first 24 residues, 1-24 (MAVKLIYLFLFLYIALLISGRTMS), serve as a signal peptide directing secretion. 3 disulfides stabilise this stretch: Cys46/Cys67, Cys52/Cys79, and Cys56/Cys81.

Belongs to the DEFL family.

It is found in the secreted. This is Defensin-like protein 37 (EDA21) from Arabidopsis thaliana (Mouse-ear cress).